The sequence spans 290 residues: 6-phospho-5-dehydro-2-deoxy-D-gluconate aldolase (290 aa).

Asp-85 (proton donor) is an active-site residue. Zn(2+) contacts are provided by His-86 and His-180. A dihydroxyacetone phosphate-binding site is contributed by Gly-181. His-208 contributes to the Zn(2+) binding site. Residues 209-211 and 230-233 each bind dihydroxyacetone phosphate; these read GAS and NINT. The residue at position 233 (Thr-233) is a Phosphothreonine.

This sequence belongs to the class II fructose-bisphosphate aldolase family. IolJ subfamily. The cofactor is Zn(2+).

The enzyme catalyses 6-phospho-5-dehydro-2-deoxy-D-gluconate = 3-oxopropanoate + dihydroxyacetone phosphate. The protein operates within polyol metabolism; myo-inositol degradation into acetyl-CoA; acetyl-CoA from myo-inositol: step 6/7. Functionally, produces dihydroxyacetone phosphate (DHAP or glycerone phosphate) and malonic semialdehyde (MSA or 3-oxopropanoate) from 6-phospho-5-dehydro-2-deoxy-D-gluconate (DKGP). This Bacillus velezensis (strain DSM 23117 / BGSC 10A6 / LMG 26770 / FZB42) (Bacillus amyloliquefaciens subsp. plantarum) protein is 6-phospho-5-dehydro-2-deoxy-D-gluconate aldolase (iolJ).